The chain runs to 333 residues: Na(+)/H(+) exchange regulatory cofactor NHE-RF1 (333 aa).

Residues 13–93 (LCCMEKGPDG…AVRLLVVQPQ (81 aa)) enclose the PDZ 1 domain. 2 disordered regions span residues 90–164 (VQPQ…RAVD) and 232–333 (LAGP…FSNL). A compositionally biased stretch (basic and acidic residues) spans 97–111 (QPPKTHSDPDGEAQR). The segment covering 112–122 (EPPAAETPAAE) has biased composition (low complexity). Residues 124–133 (SGPEERELRP) show a composition bias toward basic and acidic residues. A PDZ 2 domain is found at 135–215 (LCRIKKGPNG…ETKLLVVGVL (81 aa)). Basic and acidic residues-rich tracts occupy residues 274-289 (SETHSEPDTQEGDKRS) and 323-333 (WSKKNELFSNL).

The protein resides in the endomembrane system. It is found in the cell projection. The protein localises to the filopodium. Its subcellular location is the ruffle. It localises to the microvillus. Its function is as follows. Scaffold protein that connects plasma membrane proteins with members of the ezrin/moesin/radixin family and thereby helps to link them to the actin cytoskeleton and to regulate their surface expression. Was first known to play a role in the regulation of the activity and subcellular location of SLC9A3. May enhance Wnt signaling. In Gallus gallus (Chicken), this protein is Na(+)/H(+) exchange regulatory cofactor NHE-RF1 (NHERF1).